Reading from the N-terminus, the 393-residue chain is S-adenosylmethionine synthase 4 (393 aa).

E9 lines the Mg(2+) pocket. An ATP-binding site is contributed by H15. Position 43 (E43) interacts with K(+). Residues E56 and Q99 each coordinate L-methionine. ATP contacts are provided by residues 167-169, 235-238, D246, 252-253, A269, K273, and K277; these read DGK, SGRF, and RK. D246 contacts L-methionine. K277 is an L-methionine binding site.

It belongs to the AdoMet synthase family. In terms of assembly, homotetramer. Mn(2+) serves as cofactor. Requires Mg(2+) as cofactor. It depends on Co(2+) as a cofactor. K(+) is required as a cofactor. Detected in trichomes (at the protein level).

The protein localises to the cytoplasm. The enzyme catalyses L-methionine + ATP + H2O = S-adenosyl-L-methionine + phosphate + diphosphate. Its pathway is amino-acid biosynthesis; S-adenosyl-L-methionine biosynthesis; S-adenosyl-L-methionine from L-methionine: step 1/1. In terms of biological role, catalyzes the formation of S-adenosylmethionine from methionine and ATP. The reaction comprises two steps that are both catalyzed by the same enzyme: formation of S-adenosylmethionine (AdoMet) and triphosphate, and subsequent hydrolysis of the triphosphate. This is S-adenosylmethionine synthase 4 (METK4) from Arabidopsis thaliana (Mouse-ear cress).